The following is a 310-amino-acid chain: Ornithine carbamoyltransferase (310 aa).

Carbamoyl phosphate is bound by residues Ser-56–Thr-59, Gln-83, Arg-107, and His-134–Gln-137. Residues Asn-165, Asp-229, and Ser-233 to Met-234 each bind L-ornithine. Residues Cys-269–Leu-270 and Arg-297 each bind carbamoyl phosphate.

This sequence belongs to the aspartate/ornithine carbamoyltransferase superfamily. OTCase family.

Its subcellular location is the cytoplasm. The enzyme catalyses carbamoyl phosphate + L-ornithine = L-citrulline + phosphate + H(+). It participates in amino-acid biosynthesis; L-arginine biosynthesis; L-arginine from L-ornithine and carbamoyl phosphate: step 1/3. In terms of biological role, reversibly catalyzes the transfer of the carbamoyl group from carbamoyl phosphate (CP) to the N(epsilon) atom of ornithine (ORN) to produce L-citrulline. This chain is Ornithine carbamoyltransferase, found in Symbiobacterium thermophilum (strain DSM 24528 / JCM 14929 / IAM 14863 / T).